The following is a 248-amino-acid chain: Small ribosomal subunit protein uS3 (248 aa).

One can recognise a KH type-2 domain in the interval 38 to 106; the sequence is IREFLSKGLD…QVALNILEVK (69 aa). Residues 214–230 show a composition bias toward basic and acidic residues; the sequence is SEINAPAERRGRGDRNA. The segment at 214-248 is disordered; that stretch reads SEINAPAERRGRGDRNARPRRGGQRRQRAEQKQEG.

It belongs to the universal ribosomal protein uS3 family. Part of the 30S ribosomal subunit. Forms a tight complex with proteins S10 and S14.

Functionally, binds the lower part of the 30S subunit head. Binds mRNA in the 70S ribosome, positioning it for translation. In Corynebacterium glutamicum (strain R), this protein is Small ribosomal subunit protein uS3.